Here is a 507-residue protein sequence, read N- to C-terminus: Sterol 14-alpha demethylase CYP51A (507 aa).

A helical transmembrane segment spans residues tyrosine 7–proline 29. Tyrosine 105 lines the lanosterol pocket. Residue cysteine 449 coordinates heme.

This sequence belongs to the cytochrome P450 family. Requires heme as cofactor.

It is found in the endoplasmic reticulum membrane. It catalyses the reaction a 14alpha-methyl steroid + 3 reduced [NADPH--hemoprotein reductase] + 3 O2 = a Delta(14) steroid + formate + 3 oxidized [NADPH--hemoprotein reductase] + 4 H2O + 4 H(+). The enzyme catalyses a 14alpha-methyl steroid + reduced [NADPH--hemoprotein reductase] + O2 = a 14alpha-hydroxymethyl steroid + oxidized [NADPH--hemoprotein reductase] + H2O + H(+). It carries out the reaction a 14alpha-hydroxymethyl steroid + reduced [NADPH--hemoprotein reductase] + O2 = a 14alpha-formyl steroid + oxidized [NADPH--hemoprotein reductase] + 2 H2O + H(+). The catalysed reaction is a 14alpha-formyl steroid + reduced [NADPH--hemoprotein reductase] + O2 = a Delta(14) steroid + formate + oxidized [NADPH--hemoprotein reductase] + H2O + 2 H(+). It catalyses the reaction lanosterol + 3 reduced [NADPH--hemoprotein reductase] + 3 O2 = 4,4-dimethyl-5alpha-cholesta-8,14,24-trien-3beta-ol + formate + 3 oxidized [NADPH--hemoprotein reductase] + 4 H2O + 4 H(+). The enzyme catalyses lanosterol + reduced [NADPH--hemoprotein reductase] + O2 = 32-hydroxylanosterol + oxidized [NADPH--hemoprotein reductase] + H2O + H(+). It carries out the reaction 32-hydroxylanosterol + reduced [NADPH--hemoprotein reductase] + O2 = 32-oxolanosterol + oxidized [NADPH--hemoprotein reductase] + 2 H2O + H(+). The catalysed reaction is 32-oxolanosterol + reduced [NADPH--hemoprotein reductase] + O2 = 4,4-dimethyl-5alpha-cholesta-8,14,24-trien-3beta-ol + formate + oxidized [NADPH--hemoprotein reductase] + H2O + 2 H(+). It catalyses the reaction eburicol + 3 reduced [NADPH--hemoprotein reductase] + 3 O2 = 14-demethyleburicol + formate + 3 oxidized [NADPH--hemoprotein reductase] + 4 H2O + 4 H(+). The enzyme catalyses eburicol + reduced [NADPH--hemoprotein reductase] + O2 = 32-hydroxyeburicol + oxidized [NADPH--hemoprotein reductase] + H2O + H(+). It carries out the reaction 32-hydroxyeburicol + reduced [NADPH--hemoprotein reductase] + O2 = 32-oxoeburicol + oxidized [NADPH--hemoprotein reductase] + 2 H2O + H(+). The catalysed reaction is 32-oxoeburicol + reduced [NADPH--hemoprotein reductase] + O2 = 14-demethyleburicol + formate + oxidized [NADPH--hemoprotein reductase] + H2O + 2 H(+). It functions in the pathway steroid metabolism; ergosterol biosynthesis. Functionally, together with cyp51B and cyp51C, encodes the sterol 14alpha-demethylase that plays a critical role in the third module of ergosterol biosynthesis pathway, being ergosterol the major sterol component in fungal membranes that participates in a variety of functions. CYP51A encodes the sterol 14-alpha-demethylase induced on ergosterol depletion and is responsible for the intrinsic variation in azole sensitivity. The third module or late pathway involves the ergosterol synthesis itself through consecutive reactions that mainly occur in the endoplasmic reticulum (ER) membrane. In filamentous fungi, during the initial step of this module, lanosterol (lanosta-8,24-dien-3beta-ol) can be metabolized to eburicol. Sterol 14alpha-demethylase catalyzes the three-step oxidative removal of the 14alpha-methyl group (C-32) of both these sterols in the form of formate, and converts eburicol and lanosterol to 14-demethyleburicol (4,4,24-trimethylergosta-8,14,24(28)-trienol) and 4,4-dimethyl-5alpha-cholesta-8,14,24-trien-3beta-ol, respectively, which are further metabolized by other enzymes in the pathway to ergosterol. Can also use substrates not intrinsic to fungi, such as 24,25-dihydrolanosterol (DHL), producing 4,4'-dimethyl-8,14-cholestadien-3-beta-ol, but at lower rates than the endogenous substrates. In Gibberella zeae (strain ATCC MYA-4620 / CBS 123657 / FGSC 9075 / NRRL 31084 / PH-1) (Wheat head blight fungus), this protein is Sterol 14-alpha demethylase CYP51A.